The primary structure comprises 156 residues: MPRRRVVGQRKILPDPKFGSELLAKFINVVMVDGKKSVSESIVYGALEIIANKSGKDHLATFEGALDNIRPNVEVKSRRVGGSTYQVPVEVRPVRRNALAMRWLVEAARKRGEKSMAQRLAGELLDAADNKGSAVKKREDVHRMAEANKAFAHYRW.

It belongs to the universal ribosomal protein uS7 family. As to quaternary structure, part of the 30S ribosomal subunit. Contacts proteins S9 and S11.

Functionally, one of the primary rRNA binding proteins, it binds directly to 16S rRNA where it nucleates assembly of the head domain of the 30S subunit. Is located at the subunit interface close to the decoding center, probably blocks exit of the E-site tRNA. This Tolumonas auensis (strain DSM 9187 / NBRC 110442 / TA 4) protein is Small ribosomal subunit protein uS7.